Consider the following 287-residue polypeptide: Cis-prenyltransferase 7, chloroplastic (287 aa).

The N-terminal 34 residues, 1-34 (MLSLGFSLPPPSDNKLIITNNNQYNYRTNLANVC), are a transit peptide targeting the chloroplast. Asp61 is an active-site residue.

It belongs to the UPP synthase family. The cofactor is Mg(2+). In terms of tissue distribution, expressed in leaf trichomes and stem trichomes.

The protein resides in the plastid. It localises to the chloroplast. Uses geranylgeranyl diphosphate to catalyze the cis-prenyl chain elongation and produce polyprenyl diphosphate with a chain of 35 carbons. The polypeptide is Cis-prenyltransferase 7, chloroplastic (Solanum lycopersicum (Tomato)).